The sequence spans 646 residues: Acetyl-coenzyme A synthetase (646 aa).

Residues 190 to 193 and Thr-309 contribute to the CoA site; that span reads RAGK. ATP-binding positions include 385–387, 409–414, Asp-498, and Arg-513; these read GEP and DTWWQT. Residue Ser-521 coordinates CoA. Arg-524 contributes to the ATP binding site. The Mg(2+) site is built by Val-535, His-537, and Val-540. Residue Arg-582 participates in CoA binding. Position 607 is an N6-acetyllysine (Lys-607).

It belongs to the ATP-dependent AMP-binding enzyme family. It depends on Mg(2+) as a cofactor. Acetylated. Deacetylation by the SIR2-homolog deacetylase activates the enzyme.

The catalysed reaction is acetate + ATP + CoA = acetyl-CoA + AMP + diphosphate. Functionally, catalyzes the conversion of acetate into acetyl-CoA (AcCoA), an essential intermediate at the junction of anabolic and catabolic pathways. AcsA undergoes a two-step reaction. In the first half reaction, AcsA combines acetate with ATP to form acetyl-adenylate (AcAMP) intermediate. In the second half reaction, it can then transfer the acetyl group from AcAMP to the sulfhydryl group of CoA, forming the product AcCoA. The chain is Acetyl-coenzyme A synthetase from Pseudoalteromonas atlantica (strain T6c / ATCC BAA-1087).